The following is an 86-amino-acid chain: Small ribosomal subunit protein bS20 (86 aa).

Residues 1 to 27 (MANSKSAKKRATQAERRRQHNASRRSM) show a composition bias toward basic residues. The interval 1–28 (MANSKSAKKRATQAERRRQHNASRRSMM) is disordered.

The protein belongs to the bacterial ribosomal protein bS20 family.

Its function is as follows. Binds directly to 16S ribosomal RNA. In Aliivibrio fischeri (strain MJ11) (Vibrio fischeri), this protein is Small ribosomal subunit protein bS20.